The sequence spans 213 residues: Superoxide dismutase [Fe] (213 aa).

Fe cation is bound by residues His26, His73, Asp156, and His160.

The protein belongs to the iron/manganese superoxide dismutase family. In terms of assembly, homodimer. Requires Fe cation as cofactor.

It carries out the reaction 2 superoxide + 2 H(+) = H2O2 + O2. Destroys superoxide anion radicals which are normally produced within the cells and which are toxic to biological systems. This is Superoxide dismutase [Fe] (sodB) from Helicobacter pylori (strain J99 / ATCC 700824) (Campylobacter pylori J99).